Consider the following 142-residue polypeptide: Large ribosomal subunit protein uL11 (142 aa).

It belongs to the universal ribosomal protein uL11 family. As to quaternary structure, part of the ribosomal stalk of the 50S ribosomal subunit. Interacts with L10 and the large rRNA to form the base of the stalk. L10 forms an elongated spine to which L12 dimers bind in a sequential fashion forming a multimeric L10(L12)X complex. One or more lysine residues are methylated.

Its function is as follows. Forms part of the ribosomal stalk which helps the ribosome interact with GTP-bound translation factors. The sequence is that of Large ribosomal subunit protein uL11 from Baumannia cicadellinicola subsp. Homalodisca coagulata.